A 191-amino-acid polypeptide reads, in one-letter code: Neuronal calcium sensor 1 (191 aa).

Gly2 carries N-myristoyl glycine lipidation. EF-hand domains follow at residues 24–59 (EAEI…FPFG), 60–95 (DPSK…TSRG), 96–131 (TVEE…IYRM), and 144–179 (TPEK…DPTI). Ca(2+) is bound by residues Asp73, Asn75, Asp77, Glu84, Asp109, Asp111, Asp113, Glu120, Asp157, Asn159, Asp161, Lys163, and Glu168.

It belongs to the recoverin family.

In terms of biological role, neuronal calcium sensor, regulator of G protein-coupled receptor phosphorylation in a calcium dependent manner. Regulates neurite extension and branching by activity-dependent (Ca2+) influx in growth cones. In Aplysia californica (California sea hare), this protein is Neuronal calcium sensor 1.